The sequence spans 438 residues: 3-phosphoshikimate 1-carboxyvinyltransferase (438 aa).

Positions 25, 26, and 30 each coordinate 3-phosphoshikimate. Lys25 provides a ligand contact to phosphoenolpyruvate. Phosphoenolpyruvate-binding residues include Gly99 and Arg128. Residues Ser173, Gln175, Asp325, and Lys352 each contribute to the 3-phosphoshikimate site. Gln175 provides a ligand contact to phosphoenolpyruvate. The active-site Proton acceptor is the Asp325. Positions 356 and 398 each coordinate phosphoenolpyruvate.

It belongs to the EPSP synthase family. Monomer.

It localises to the cytoplasm. The enzyme catalyses 3-phosphoshikimate + phosphoenolpyruvate = 5-O-(1-carboxyvinyl)-3-phosphoshikimate + phosphate. It functions in the pathway metabolic intermediate biosynthesis; chorismate biosynthesis; chorismate from D-erythrose 4-phosphate and phosphoenolpyruvate: step 6/7. In terms of biological role, catalyzes the transfer of the enolpyruvyl moiety of phosphoenolpyruvate (PEP) to the 5-hydroxyl of shikimate-3-phosphate (S3P) to produce enolpyruvyl shikimate-3-phosphate and inorganic phosphate. This is 3-phosphoshikimate 1-carboxyvinyltransferase from Prochlorococcus marinus subsp. pastoris (strain CCMP1986 / NIES-2087 / MED4).